Consider the following 363-residue polypeptide: Trichocyst matrix protein T4-A (363 aa).

The signal sequence occupies residues 1 to 17 (MARSLTILAIVFAVATA). The propeptide occupies 18–52 (RVTKSESPKEILAQVNKDSFGNSILSVLQLQLATG). Positions 85 to 119 (VAFEKIIADLEQEIAYHQTQIVALSNLRDSTTEAL) form a coiled coil. The propeptide occupies 190–221 (RFEKVQAKLMESKHALFKPLINALTQLASKVD). Residues 244-352 (ASLLATEERQ…EVLTQKLSAA (109 aa)) are a coiled coil.

It belongs to the TMP family. Post-translationally, two components are produced by post-translational processing from the precursor peptide.

The protein resides in the trichocyst. Functionally, structural protein that crystallize inside the trichocyst matrix. This Paramecium tetraurelia protein is Trichocyst matrix protein T4-A (T4A).